The sequence spans 736 residues: Subtilisin-like protease SBT1.9 (736 aa).

An N-terminal signal peptide occupies residues 1–20; that stretch reads MGMTVVIILVFSFFVAIVTA. The propeptide at 21-101 is activation peptide; it reads ETSPYIIHMD…FTKDLPVKLH (81 aa). In terms of domain architecture, Inhibitor I9 spans 25 to 101; the sequence is YIIHMDLSAK…FTKDLPVKLH (77 aa). Residues 103-582 enclose the Peptidase S8 domain; it reads TFSPKFIGLN…AGHVSTNKVL (480 aa). A glycan (N-linked (GlcNAc...) asparagine) is linked at Asn112. Asp133 serves as the catalytic Charge relay system. N-linked (GlcNAc...) asparagine glycosylation is present at Asn162. Catalysis depends on His205, which acts as the Charge relay system. Residues Asn220, Asn381, and Asn453 are each glycosylated (N-linked (GlcNAc...) asparagine). A PA domain is found at 367 to 441; that stretch reads VQFPVTYIES…VAFIGSKHRE (75 aa). Ser529 (charge relay system) is an active-site residue. The N-linked (GlcNAc...) asparagine glycan is linked to Asn617.

The protein belongs to the peptidase S8 family.

Its subcellular location is the secreted. In Arabidopsis thaliana (Mouse-ear cress), this protein is Subtilisin-like protease SBT1.9.